Consider the following 302-residue polypeptide: Protoheme IX farnesyltransferase 2 (302 aa).

Transmembrane regions (helical) follow at residues 14–34, 36–56, 85–105, 108–128, 133–153, 163–183, 209–229, 230–250, and 264–284; these read IIFG…QGSV, WWLL…GCAI, AALA…WFCT, LATG…SLYM, VYGT…GYCA, AILL…IAIF, IVLY…GGYA, GYGY…MALS, and QVFF…AVDG.

This sequence belongs to the UbiA prenyltransferase family. Protoheme IX farnesyltransferase subfamily.

It localises to the cell inner membrane. The enzyme catalyses heme b + (2E,6E)-farnesyl diphosphate + H2O = Fe(II)-heme o + diphosphate. Its pathway is porphyrin-containing compound metabolism; heme O biosynthesis; heme O from protoheme: step 1/1. Functionally, converts heme B (protoheme IX) to heme O by substitution of the vinyl group on carbon 2 of heme B porphyrin ring with a hydroxyethyl farnesyl side group. This chain is Protoheme IX farnesyltransferase 2, found in Chromobacterium violaceum (strain ATCC 12472 / DSM 30191 / JCM 1249 / CCUG 213 / NBRC 12614 / NCIMB 9131 / NCTC 9757 / MK).